The primary structure comprises 320 residues: Chitinase 3 (320 aa).

Residues 1–18 (MRALALAVVAMAVVAVRG) form the signal peptide. One can recognise a Chitin-binding type-1 domain in the interval 19-59 (EQCGSQAGGALCPNCLCCSQYGWCGSTSDYCGAGCQSQCSG). 8 disulfides stabilise this stretch: Cys21–Cys36, Cys30–Cys42, Cys33–Cys61, Cys35–Cys49, Cys53–Cys57, Cys97–Cys159, Cys172–Cys180, and Cys279–Cys311. Glu141 acts as the Proton donor in catalysis.

This sequence belongs to the glycosyl hydrolase 19 family. Chitinase class I subfamily. In terms of tissue distribution, expressed at low levels in roots, leaves, sheaths and meristems.

The catalysed reaction is Random endo-hydrolysis of N-acetyl-beta-D-glucosaminide (1-&gt;4)-beta-linkages in chitin and chitodextrins.. Hydrolyzes chitin and plays a role in defense against fungal pathogens containing chitin. Inhibits the growth of T.reesei fungus on plate assay. The sequence is that of Chitinase 3 (Cht3) from Oryza sativa subsp. japonica (Rice).